We begin with the raw amino-acid sequence, 964 residues long: MASISDDGMALSGNLKKLKTMKKKFFVLYEETSTSSARLEYYDTEKKFLQRAEPKRVIYLKNCFNINRRLDTKHRFVIVLSSRDGGFGIVLENENDLRKWLDKLLVLQRNIANSNGTAHSPYDQVWQVVIQKKGISEKVGITGTYHCCLTSKSLTFVCIGPEKTPNGEDRVASIEILLTTIRRCGHASPQCIFYVELGRQSVLGSGDLWMETDNAAVATNMHNMILSAMSAKTESNTNLINVYQNRPDLSHEPMRKRSSSANEASKPINVNVIQNSQNSLELRSCSSPHNYGFSRERCDSLPTRNGTLSESSNQTYFGSNHGLRFNTISGIRPHSTNKHSNSPTFTMPLRCSESEDSSISVDESDDNGSFSHYRLNTRTSETAIPEENIDDFASAEFSKVTEPNESDENYIPMNPVNPTDAIHEKEKADLQRLEDASLHFNFPEHASEKLAKDFDLDSDNQCCRPIRAYSIGNKVEHLKFNKRLGHLNDTGQNPNRVRAYSVGSKSKIPRCDLQRVVLVEDNKHEFASNRSQSSIGKEGSSYGSSANRQKKSTSAPLLSLKNQINSDRMSDLMEIDFSQATNLEKQKFIKNNEIPKYIENVFPKAPRTDSSSLTLHATSQKDIFNGSKLNNTAITSEDGYLEMKPVGNGYTPSSNCLPIKVEKLKLSDYQTTAPPLLTATAAPVQDLNKISTYNISAEKWREQPSRSEEKKSNSPLNDNPFSLKPTNVESKSKSHDVHSANQIDCEKVCVQSDKLNNLTDKIVENNNLDIGGHEEKKLVHSISSEDYTQIKDKANDFTKFNEAGYKILQIKSDSSLISSKLYQKGMHKDNLERTHRLTESVNTIPDNATATVGSSSLTKFNINSVKPAADSRSTGTDPSTAQNILQIKDLNFPSRSSSRISQPELHYASLDLPHCSGQNPAKYLKRGSRESPPVSACPEDGNTYARIDFDQSDSSSSSSNIFNT.

The region spanning 8 to 109 (GMALSGNLKK…WLDKLLVLQR (102 aa)) is the PH domain. Residues 122–236 (YDQVWQVVIQ…SAMSAKTESN (115 aa)) enclose the IRS-type PTB domain. Positions 249–268 (LSHEPMRKRSSSANEASKPI) are disordered. 3 positions are modified to phosphoserine: Ser-286, Ser-287, and Ser-342. Phosphotyrosine; by INSR is present on Tyr-410. Residues 410–413 (YIPM) carry the YXXM motif 1 motif. Positions 527–560 (ASNRSQSSIGKEGSSYGSSANRQKKSTSAPLLSL) are disordered. A compositionally biased stretch (polar residues) spans 528 to 560 (SNRSQSSIGKEGSSYGSSANRQKKSTSAPLLSL). Ser-554 carries the phosphoserine modification. Residues 640-643 (YLEM) carry the YXXM motif 2 motif. Over residues 698-712 (EKWREQPSRSEEKKS) the composition is skewed to basic and acidic residues. Residues 698–735 (EKWREQPSRSEEKKSNSPLNDNPFSLKPTNVESKSKSH) are disordered. Residues 713 to 729 (NSPLNDNPFSLKPTNVE) show a composition bias toward polar residues. Tyr-907 is subject to Phosphotyrosine; by INSR. The interval 921-964 (AKYLKRGSRESPPVSACPEDGNTYARIDFDQSDSSSSSSNIFNT) is disordered. A phosphoserine mark is found at Ser-928 and Ser-931. Tyr-944 carries the phosphotyrosine; by INSR modification. Positions 952–964 (SDSSSSSSNIFNT) are enriched in low complexity.

In terms of assembly, bindings to phosphatidylinositol 3-kinase and SHP2.

In terms of biological role, activates phosphatidylinositol 3-kinase when bound to the regulatory p85 subunit. May mediate the control of various cellular processes by insulin-like peptides. When phosphorylated by the insulin receptor binds specifically to various cellular proteins containing SH2 domains. Involved in control of cell proliferation, cell size, and body and organ growth throughout development. Also has a role in a signaling pathway controlling the physiological response required to endure periods of low nutrient conditions. Insulin/insulin-like growth factor (IGF) signaling pathway has a role in regulating aging and is necessary in the ovary for vitellogenic maturation. This Drosophila sechellia (Fruit fly) protein is Insulin receptor substrate 1.